The primary structure comprises 360 residues: Phenylalanine--tRNA ligase alpha subunit (360 aa).

Mg(2+) is bound at residue E260.

It belongs to the class-II aminoacyl-tRNA synthetase family. Phe-tRNA synthetase alpha subunit type 1 subfamily. As to quaternary structure, tetramer of two alpha and two beta subunits. Mg(2+) is required as a cofactor.

Its subcellular location is the cytoplasm. The catalysed reaction is tRNA(Phe) + L-phenylalanine + ATP = L-phenylalanyl-tRNA(Phe) + AMP + diphosphate + H(+). This is Phenylalanine--tRNA ligase alpha subunit from Methylocella silvestris (strain DSM 15510 / CIP 108128 / LMG 27833 / NCIMB 13906 / BL2).